Here is a 190-residue protein sequence, read N- to C-terminus: Ribose 1,5-bisphosphate phosphokinase PhnN (190 aa).

Residue 11–18 participates in ATP binding; the sequence is GPSGSGKD.

The protein belongs to the ribose 1,5-bisphosphokinase family.

It catalyses the reaction alpha-D-ribose 1,5-bisphosphate + ATP = 5-phospho-alpha-D-ribose 1-diphosphate + ADP. Its pathway is metabolic intermediate biosynthesis; 5-phospho-alpha-D-ribose 1-diphosphate biosynthesis; 5-phospho-alpha-D-ribose 1-diphosphate from D-ribose 5-phosphate (route II): step 3/3. Its function is as follows. Catalyzes the phosphorylation of ribose 1,5-bisphosphate to 5-phospho-D-ribosyl alpha-1-diphosphate (PRPP). The chain is Ribose 1,5-bisphosphate phosphokinase PhnN from Thiobacillus denitrificans (strain ATCC 25259 / T1).